Consider the following 477-residue polypeptide: Stromelysin-1 (477 aa).

A signal peptide spans 1–17; sequence MKNLPILLLLCVAACSA. The propeptide at 18–99 is activation peptide; sequence YPLDRSARDE…SRCGVPDVGH (82 aa). Residues 90-97 carry the Cysteine switch motif; sequence SRCGVPDV. Cys92 contributes to the Zn(2+) binding site. An N-linked (GlcNAc...) asparagine glycan is attached at Asn120. Positions 124 and 158 each coordinate Ca(2+). 2 residues coordinate Zn(2+): His168 and Asp170. 4 residues coordinate Ca(2+): Asp175, Gly176, Gly178, and Val180. His183 contacts Zn(2+). Ca(2+) contacts are provided by Gly190, Asn192, and Asp194. His196 is a Zn(2+) binding site. The Ca(2+) site is built by Asp198, Asp199, and Glu201. Position 218 (His218) interacts with Zn(2+). Glu219 is an active-site residue. Positions 222 and 228 each coordinate Zn(2+). Positions 260–285 are disordered; it reads QSLYGPPPASPDSPVEPSEPEPPAPG. 4 Hemopexin repeats span residues 287-336, 337-383, 385-433, and 434-477; these read LAMC…WPSL, PSGI…GFPP, VRKI…FPGI, and DSKL…WFNC. Cys290 and Cys477 are oxidised to a cystine. Residue Asp297 participates in Ca(2+) binding. Ca(2+)-binding residues include Asp389 and Asp438.

The protein belongs to the peptidase M10A family. Ca(2+) serves as cofactor. Zn(2+) is required as a cofactor.

The protein resides in the secreted. It is found in the extracellular space. The protein localises to the extracellular matrix. The catalysed reaction is Preferential cleavage where P1', P2' and P3' are hydrophobic residues.. In terms of biological role, metalloproteinase with a rather broad substrate specificity that can degrade fibronectin, laminin, gelatins of type I, III, IV, and V; collagens III, IV, X, and IX, and cartilage proteoglycans. Activates different molecules including growth factors, plasminogen or other matrix metalloproteinases such as MMP9. Once released into the extracellular matrix (ECM), the inactive pro-enzyme is activated by the plasmin cascade signaling pathway. Also acts intracellularly. For example, in dopaminergic neurons, gets activated by the serine protease HTRA2 upon stress and plays a pivotal role in DA neuronal degeneration by mediating microglial activation and alpha-synuclein/SNCA cleavage. In addition, plays a role in immune response and possesses antiviral activity against various viruses. Mechanistically, translocates from the cytoplasm into the cell nucleus upon virus infection to influence NF-kappa-B activities. This chain is Stromelysin-1 (MMP3), found in Equus caballus (Horse).